Here is a 1483-residue protein sequence, read N- to C-terminus: Cystic fibrosis transmembrane conductance regulator (1483 aa).

The Cytoplasmic portion of the chain corresponds to 1 to 77 (MQRSPLEKAS…KLINALRRCF (77 aa)). Residues 78–98 (FWKFMFYGILLYLGEVTKAVQ) form a helical membrane-spanning segment. The 285-residue stretch at 81–365 (FMFYGILLYL…WAVQTWYDSL (285 aa)) folds into the ABC transmembrane type-1 1 domain. At 99–122 (PLLLGRIIASYDPDNKVERSIAIY) the chain is on the extracellular side. The helical transmembrane segment at 123–146 (LGIGLCLLFVVRTLLLHPAIFGLH) threads the bilayer. The Cytoplasmic portion of the chain corresponds to 147 to 195 (HIGMQMRIAMFSLIYKKTLKLSSRVLDKISIGQLISLLSNNLNKFDEGL). The helical transmembrane segment at 196–216 (ALAHFVWIVPLQVTLLMGLLW) threads the bilayer. At 217-222 (ELLQAS) the chain is on the extracellular side. The chain crosses the membrane as a helical span at residues 223 to 243 (AFCGLAFLIIVAFYQAGLGRM). At 244 to 298 (MMKYRDKRGGKINERLVITSEMIENIQSVKAYCWEEAMEKMIENLRQTELKLTRK) the chain is on the cytoplasmic side. Residues 299–319 (AAYVRYCNSSAFFFSGFFVVF) form a helical membrane-spanning segment. Residues 320 to 339 (LSVLPYALMKGIILRKIFTT) lie on the Extracellular side of the membrane. The chain crosses the membrane as a helical span at residues 340–358 (ISFCIVLRMAVTRQFPWAV). At 359–859 (QTWYDSLGAI…YLRYITIHKS (501 aa)) the chain is on the cytoplasmic side. ATP is bound by residues Trp401, Ser434, 458 to 465 (GSTGAGKT), and Gln493. Residues 423-646 (NGDNSLFFSN…RPDFSSKLMG (224 aa)) enclose the ABC transporter 1 domain. Residue Cys524 is the site of S-palmitoyl cysteine attachment. 2 positions are modified to phosphoserine: Ser549 and Ser660. The disordered R region stretch occupies residues 654–832 (SAERRNSILT…EEINEEDLKE (179 aa)). Ser670 carries the post-translational modification Phosphoserine; by PKA. Residue Ser686 is modified to Phosphoserine. Residue Lys688 forms a Glycyl lysine isopeptide (Lys-Gly) (interchain with G-Cter in ubiquitin) linkage. A phosphoserine mark is found at Ser700 and Ser712. At Thr717 the chain carries Phosphothreonine. Phosphoserine is present on residues Ser737, Ser768, Ser791, Ser796, and Ser814. The chain crosses the membrane as a helical span at residues 860-880 (LIFVLIWCLIIFLAEVAVSLV). One can recognise an ABC transmembrane type-1 2 domain in the interval 860–1157 (LIFVLIWCLI…AVNSSIDVDS (298 aa)). The Extracellular segment spans residues 881-920 (FLLLFEKSPRQDTGNVTKSSNNSSYGVIITNTSSYYIIYI). 4 N-linked (GlcNAc...) asparagine glycosylation sites follow: Asn895, Asn901, Asn902, and Asn911. The chain crosses the membrane as a discontinuously helical span at residues 921 to 941 (YVGVADTLLALGLLRGLPLVH). The Cytoplasmic portion of the chain corresponds to 942 to 992 (TLITASKILHHKMLHSVLQAPMSTLNTLKAGGILNRFSKDIAILDDLLPLT). A helical transmembrane segment spans residues 993 to 1013 (IFDFIQLILIVIGAVIVVSVL). Residues 1014–1015 (EP) are Extracellular-facing. A helical membrane pass occupies residues 1016-1036 (YIFLATVPVIIAFVMLRAYFL). Residues 1037 to 1097 (HTSQQLKQLE…TANWFLYLST (61 aa)) lie on the Cytoplasmic side of the membrane. The chain crosses the membrane as a helical span at residues 1098–1118 (LRWFQMRIEMIFVIFFIAVTF). The Extracellular segment spans residues 1119 to 1132 (ISILTTGDGEGRVG). A helical membrane pass occupies residues 1133–1153 (IILTLAMNIMNTLQWAVNSSI). Residues 1154–1483 (DVDSLMRSVS…TEEEVQETRL (330 aa)) are Cytoplasmic-facing. One can recognise an ABC transporter 2 domain in the interval 1213 to 1446 (MTVKDLTAKY…KSLFRQAISN (234 aa)). ATP-binding positions include Tyr1222 and 1247–1254 (GRTGSGKS). The interval 1389–1483 (RTIKQAFADC…TEEEVQETRL (95 aa)) is interaction with GORASP2. The S-palmitoyl cysteine moiety is linked to residue Cys1398. 2 positions are modified to phosphoserine: Ser1447 and Ser1459. Residues 1455–1465 (HRNSSKHKSRS) show a composition bias toward basic residues. A disordered region spans residues 1455–1483 (HRNSSKHKSRSKIAALKEETEEEVQETRL). The segment covering 1473–1483 (ETEEEVQETRL) has biased composition (acidic residues). A PDZ-binding motif is present at residues 1481-1483 (TRL).

It belongs to the ABC transporter superfamily. ABCC family. CFTR transporter (TC 3.A.1.202) subfamily. Monomer; does not require oligomerization for channel activity. May form oligomers in the membrane. Interacts with SLC26A3, SLC26A6 and NHERF1. Interacts with SHANK2. Interacts with MYO6. Interacts (via C-terminus) with GOPC (via PDZ domain); this promotes CFTR internalization and thereby decreases channel activity. Interacts with SLC4A7 through NHERF1. Found in a complex with MYO5B and RAB11A. Interacts with ANO1. Interacts with SLC26A8. Interacts with AHCYL1; the interaction increases CFTR activity. Interacts with CSE1L. The core-glycosylated form interacts with GORASP2 (via PDZ GRASP-type 1 domain) in respone to ER stress. Interacts with MARCHF2; the interaction leads to CFTR ubiqtuitination and degradation. Interacts with ADGRG2. Post-translationally, N-glycosylated. In terms of processing, phosphorylated; cAMP treatment promotes phosphorylation and activates the channel. Dephosphorylation decreases the ATPase activity (in vitro). Phosphorylation at PKA sites activates the channel. Phosphorylation at PKC sites enhances the response to phosphorylation by PKA. Phosphorylated by AMPK; this inhibits channel activity. Ubiquitinated, leading to its degradation in the lysosome. Deubiquitination by USP10 in early endosomes enhances its endocytic recycling to the cell membrane. Ubiquitinated by RNF185 during ER stress. Ubiquitinated by MARCHF2.

It is found in the apical cell membrane. Its subcellular location is the early endosome membrane. The protein localises to the cell membrane. It localises to the recycling endosome membrane. The protein resides in the endoplasmic reticulum membrane. It is found in the nucleus. The enzyme catalyses ATP + H2O + closed Cl(-) channel = ADP + phosphate + open Cl(-) channel.. It carries out the reaction chloride(in) = chloride(out). The catalysed reaction is hydrogencarbonate(in) = hydrogencarbonate(out). It catalyses the reaction ATP + H2O = ADP + phosphate + H(+). Its function is as follows. Epithelial ion channel that plays an important role in the regulation of epithelial ion and water transport and fluid homeostasis. Mediates the transport of chloride ions across the cell membrane. The ion channel is also permeable to HCO(3)(-); selectivity depends on the extracellular chloride concentration. Exerts its function also by modulating the activity of other ion channels and transporters. Contributes to the regulation of the pH and the ion content of the epithelial fluid layer. Modulates the activity of the epithelial sodium channel (ENaC) complex, in part by regulating the cell surface expression of the ENaC complex. May regulate bicarbonate secretion and salvage in epithelial cells by regulating the transporter SLC4A7. Can inhibit the chloride channel activity of ANO1. Plays a role in the chloride and bicarbonate homeostasis during sperm epididymal maturation and capacitation. In Atelerix albiventris (Middle-African hedgehog), this protein is Cystic fibrosis transmembrane conductance regulator.